The following is a 348-amino-acid chain: Fe(3+) ions import ATP-binding protein FbpC (348 aa).

The region spanning 6–236 is the ABC transporter domain; it reads LSLEGATVRF…PADAFVARFL (231 aa). Residue 38–45 participates in ATP binding; it reads GPSGSGKS.

The protein belongs to the ABC transporter superfamily. Fe(3+) ion importer (TC 3.A.1.10) family. As to quaternary structure, the complex is composed of two ATP-binding proteins (FbpC), two transmembrane proteins (FbpB) and a solute-binding protein (FbpA).

The protein resides in the cell membrane. The catalysed reaction is Fe(3+)(out) + ATP + H2O = Fe(3+)(in) + ADP + phosphate + H(+). Part of the ABC transporter complex FbpABC involved in Fe(3+) ions import. Responsible for energy coupling to the transport system. The chain is Fe(3+) ions import ATP-binding protein FbpC from Streptomyces coelicolor (strain ATCC BAA-471 / A3(2) / M145).